Consider the following 365-residue polypeptide: Sulfate/thiosulfate import ATP-binding protein CysA (365 aa).

One can recognise an ABC transporter domain in the interval 3-237 (IEIANIKKSF…PATRFVLEFM (235 aa)). Position 35–42 (35–42 (GPSGSGKT)) interacts with ATP.

This sequence belongs to the ABC transporter superfamily. Sulfate/tungstate importer (TC 3.A.1.6) family. In terms of assembly, the complex is composed of two ATP-binding proteins (CysA), two transmembrane proteins (CysT and CysW) and a solute-binding protein (CysP).

The protein localises to the cell inner membrane. The enzyme catalyses sulfate(out) + ATP + H2O = sulfate(in) + ADP + phosphate + H(+). It catalyses the reaction thiosulfate(out) + ATP + H2O = thiosulfate(in) + ADP + phosphate + H(+). Part of the ABC transporter complex CysAWTP involved in sulfate/thiosulfate import. Responsible for energy coupling to the transport system. The protein is Sulfate/thiosulfate import ATP-binding protein CysA of Escherichia coli O6:H1 (strain CFT073 / ATCC 700928 / UPEC).